The chain runs to 457 residues: Multidrug resistance protein MdtK (457 aa).

The next 12 membrane-spanning stretches (helical) occupy residues 11–31, 53–73, 93–113, 127–147, 160–180, 188–208, 243–263, 276–296, 314–334, 350–370, 387–407, and 418–438; these read LLAL…MGFV, IWLP…PVIA, WLAG…GYII, AVGY…FQVA, GMVM…IFIY, LGGI…FIAM, LPIA…ALLV, IALN…AAVT, AART…IFTV, VVAL…SDSI, IFFI…YILA, and PAGF…LMML.

It belongs to the multi antimicrobial extrusion (MATE) (TC 2.A.66.1) family. MdtK subfamily.

It is found in the cell inner membrane. Functionally, multidrug efflux pump that functions probably as a Na(+)/drug antiporter. The polypeptide is Multidrug resistance protein MdtK (Salmonella newport (strain SL254)).